A 115-amino-acid polypeptide reads, in one-letter code: Large ribosomal subunit protein bL19 (115 aa).

It belongs to the bacterial ribosomal protein bL19 family.

This protein is located at the 30S-50S ribosomal subunit interface and may play a role in the structure and function of the aminoacyl-tRNA binding site. This Sodalis glossinidius (strain morsitans) protein is Large ribosomal subunit protein bL19.